The chain runs to 402 residues: Beta sliding clamp (402 aa).

This sequence belongs to the beta sliding clamp family. As to quaternary structure, forms a ring-shaped head-to-tail homodimer around DNA which binds and tethers DNA polymerases and other proteins to the DNA. The DNA replisome complex has a single clamp-loading complex (3 tau and 1 each of delta, delta', psi and chi subunits) which binds 3 Pol III cores (1 core on the leading strand and 2 on the lagging strand) each with a beta sliding clamp dimer. Additional proteins in the replisome are other copies of gamma, psi and chi, Ssb, DNA helicase and RNA primase.

Its subcellular location is the cytoplasm. Confers DNA tethering and processivity to DNA polymerases and other proteins. Acts as a clamp, forming a ring around DNA (a reaction catalyzed by the clamp-loading complex) which diffuses in an ATP-independent manner freely and bidirectionally along dsDNA. Initially characterized for its ability to contact the catalytic subunit of DNA polymerase III (Pol III), a complex, multichain enzyme responsible for most of the replicative synthesis in bacteria; Pol III exhibits 3'-5' exonuclease proofreading activity. The beta chain is required for initiation of replication as well as for processivity of DNA replication. The polypeptide is Beta sliding clamp (dnaN) (Mycobacterium bovis (strain ATCC BAA-935 / AF2122/97)).